Here is an 83-residue protein sequence, read N- to C-terminus: Toxin To15 (83 aa).

An N-terminal signal peptide occupies residues 1 to 19 (MKGIILLISCLMLIEVVVG). The region spanning 21-82 (KEGYPLDSSG…IWNAKTNKCY (62 aa)) is the LCN-type CS-alpha/beta domain. 4 disulfide bridges follow: C31/C81, C35/C57, C43/C62, and C47/C64.

It belongs to the long (4 C-C) scorpion toxin superfamily. Sodium channel inhibitor family. Beta subfamily. Expressed by the venom gland.

The protein resides in the secreted. Its function is as follows. Beta toxins bind voltage-independently at site-4 of sodium channels (Nav) and shift the voltage of activation toward more negative potentials thereby affecting sodium channel activation and promoting spontaneous and repetitive firing. The sequence is that of Toxin To15 from Tityus obscurus (Amazonian scorpion).